Consider the following 213-residue polypeptide: Adenylate kinase (213 aa).

14–19 (GSGKGT) provides a ligand contact to ATP. Residues 34 to 63 (STGDLLRAIIREGTPNGLKAKAYLDKGAFV) form an NMP region. AMP-binding positions include threonine 35, arginine 40, 61–63 (AFV), 89–92 (GFPR), and glutamine 96. Residues 129–162 (SRFLCPSCSRIYNTSQGHTECPDCHVPLIRRSDD) form an LID region. Residue arginine 130 coordinates ATP. Zn(2+) contacts are provided by cysteine 133 and cysteine 136. 139 to 140 (IY) contributes to the ATP binding site. Residues cysteine 149 and cysteine 152 each coordinate Zn(2+). AMP is bound by residues arginine 159 and arginine 170. Asparagine 198 provides a ligand contact to ATP.

Belongs to the adenylate kinase family. Monomer.

It is found in the cytoplasm. The enzyme catalyses AMP + ATP = 2 ADP. It participates in purine metabolism; AMP biosynthesis via salvage pathway; AMP from ADP: step 1/1. Functionally, catalyzes the reversible transfer of the terminal phosphate group between ATP and AMP. Plays an important role in cellular energy homeostasis and in adenine nucleotide metabolism. In Chlamydia pneumoniae (Chlamydophila pneumoniae), this protein is Adenylate kinase.